Consider the following 348-residue polypeptide: Histidinol-phosphate aminotransferase (348 aa).

Lys211 is subject to N6-(pyridoxal phosphate)lysine.

It belongs to the class-II pyridoxal-phosphate-dependent aminotransferase family. Histidinol-phosphate aminotransferase subfamily. As to quaternary structure, homodimer. The cofactor is pyridoxal 5'-phosphate.

The catalysed reaction is L-histidinol phosphate + 2-oxoglutarate = 3-(imidazol-4-yl)-2-oxopropyl phosphate + L-glutamate. Its pathway is amino-acid biosynthesis; L-histidine biosynthesis; L-histidine from 5-phospho-alpha-D-ribose 1-diphosphate: step 7/9. In Pseudomonas entomophila (strain L48), this protein is Histidinol-phosphate aminotransferase.